Consider the following 523-residue polypeptide: Sucrose 6(F)-phosphate phosphorylase (523 aa).

Sucrose 6(F)-phosphate is bound by residues Asp-58, His-96, 221–223, Glu-264, 326–327, and Lys-434; these read RLD and HD. Asp-223 serves as the catalytic Nucleophile. Glu-264 acts as the Proton donor/acceptor in catalysis.

The protein belongs to the glycosyl hydrolase 13 family. Sucrose phosphorylase subfamily. As to quaternary structure, monomer.

The enzyme catalyses sucrose 6(F)-phosphate + phosphate = beta-D-fructose 6-phosphate + alpha-D-glucose 1-phosphate. In terms of biological role, catalyzes the reversible phosphorolysis of sucrose 6(F)-phosphate into alpha-D-glucose 1-phosphate (Glc1P) and D-fructose 6-phosphate. May be involved in a new pathway for the degradation of sucrose, which could become phosphorylated on its fructose moiety during uptake via a PTS system. Shows strict specificity since it does not catalyze reactions with alternative substrates. This is Sucrose 6(F)-phosphate phosphorylase from Ilumatobacter coccineus (strain NBRC 103263 / KCTC 29153 / YM16-304).